Reading from the N-terminus, the 190-residue chain is ADP-ribosylation factor F (190 aa).

GTP contacts are provided by residues 34–40 (DGAGKST), 75–79 (DIGGQ), and 136–139 (NKQD).

It belongs to the small GTPase superfamily. Arf family.

The protein localises to the golgi apparatus. GTP-binding protein that may be involved in protein trafficking. May modulate vesicle budding and uncoating within the Golgi apparatus. In Dictyostelium discoideum (Social amoeba), this protein is ADP-ribosylation factor F (arrF).